Consider the following 97-residue polypeptide: Protein RALF-like 2 (97 aa).

Positions 1–25 (MEARHMLVTILLLSFVFMNIMKVEA) are cleaved as a signal peptide. 2 disulfides stabilise this stretch: cysteine 42/cysteine 49 and cysteine 61/cysteine 67.

The protein belongs to the plant rapid alkalinization factor (RALF) family.

It localises to the secreted. Functionally, cell signaling peptide that may regulate plant stress, growth, and development. Mediates a rapid alkalinization of extracellular space by mediating a transient increase in the cytoplasmic Ca(2+) concentration leading to a calcium-dependent signaling events through a cell surface receptor and a concomitant activation of some intracellular mitogen-activated protein kinases. The polypeptide is Protein RALF-like 2 (RALFL2) (Arabidopsis thaliana (Mouse-ear cress)).